The chain runs to 518 residues: Integrator complex subunit 14 (518 aa).

The VWFA domain maps to 2–204; sequence PTVVVMDVSL…KNVQSMFGKL (203 aa). Residues S10, S12, and T86 each contribute to the Mg(2+) site. The interval 373–394 is disordered; sequence SDAKENPYGDDDNKSPFPLQPK. Residues 374–386 show a composition bias toward basic and acidic residues; that stretch reads DAKENPYGDDDNK.

This sequence belongs to the Integrator subunit 14 family. As to quaternary structure, component of the Integrator complex, composed of core subunits INTS1, INTS2, INTS3, INTS4, INTS5, INTS6, INTS7, INTS8, INTS9/RC74, INTS10, INTS11/CPSF3L, INTS12, INTS13, INTS14 and INTS15. The core complex associates with protein phosphatase 2A subunits PPP2CA and PPP2R1A, to form the Integrator-PP2A (INTAC) complex. INTS14 is part of the tail subcomplex, composed of INTS10, INTS13, INTS14 and INTS15.

It localises to the nucleus. Functionally, component of the integrator complex, a multiprotein complex that terminates RNA polymerase II (Pol II) transcription in the promoter-proximal region of genes. The integrator complex provides a quality checkpoint during transcription elongation by driving premature transcription termination of transcripts that are unfavorably configured for transcriptional elongation: the complex terminates transcription by (1) catalyzing dephosphorylation of the C-terminal domain (CTD) of Pol II subunit POLR2A/RPB1 and SUPT5H/SPT5, (2) degrading the exiting nascent RNA transcript via endonuclease activity and (3) promoting the release of Pol II from bound DNA. The integrator complex is also involved in terminating the synthesis of non-coding Pol II transcripts, such as enhancer RNAs (eRNAs), small nuclear RNAs (snRNAs), telomerase RNAs and long non-coding RNAs (lncRNAs). Within the integrator complex, INTS14 is part of the integrator tail module that acts as a platform for the recruitment of transcription factors at promoters. The sequence is that of Integrator complex subunit 14 from Gallus gallus (Chicken).